The primary structure comprises 496 residues: Coiled-coil domain-containing protein 77 (496 aa).

A disordered region spans residues methionine 1–glutamate 42. Residues proline 15 to aspartate 33 are compositionally biased toward polar residues. Residues arginine 51 to leucine 113 adopt a coiled-coil conformation. The interval glutamine 170–alanine 208 is disordered. Residues glutamine 214–isoleucine 495 adopt a coiled-coil conformation.

The protein is Coiled-coil domain-containing protein 77 (ccdc77) of Xenopus laevis (African clawed frog).